The following is a 137-amino-acid chain: ATP synthase epsilon chain, chloroplastic (137 aa).

Belongs to the ATPase epsilon chain family. F-type ATPases have 2 components, CF(1) - the catalytic core - and CF(0) - the membrane proton channel. CF(1) has five subunits: alpha(3), beta(3), gamma(1), delta(1), epsilon(1). CF(0) has three main subunits: a, b and c.

Its subcellular location is the plastid. The protein resides in the chloroplast thylakoid membrane. Produces ATP from ADP in the presence of a proton gradient across the membrane. This is ATP synthase epsilon chain, chloroplastic from Hordeum vulgare (Barley).